Here is a 359-residue protein sequence, read N- to C-terminus: Structure-specific endonuclease subunit SLX1 homolog (359 aa).

The GIY-YIG domain occupies 9–91; sequence GLFACYCLVA…TYPTRSRYVN (83 aa). An SLX1-type zinc finger spans residues 192 to 238; sequence CPICQDGVSPSNVQCMQCSARFCITCAGKLFTRRNTLIPCFGKCPIC. The interval 256-359 is disordered; it reads VAGRKSVPHK…LPSDVISITD (104 aa). Positions 269–281 are enriched in polar residues; sequence VDGQSSLSQNSSY. Basic and acidic residues predominate over residues 295–306; sequence EPEKDDISRDES. Positions 316–326 are enriched in low complexity; it reads SSVALSDSSRS.

Belongs to the SLX1 family. Forms a heterodimer with a member of the SLX4 family. Requires a divalent metal cation as cofactor.

It localises to the nucleus. In terms of biological role, catalytic subunit of a heterodimeric structure-specific endonuclease that resolves DNA secondary structures generated during DNA repair and recombination. Has endonuclease activity towards branched DNA substrates, introducing single-strand cuts in duplex DNA close to junctions with ss-DNA. The polypeptide is Structure-specific endonuclease subunit SLX1 homolog (Giardia intestinalis (strain ATCC 50803 / WB clone C6) (Giardia lamblia)).